A 426-amino-acid polypeptide reads, in one-letter code: Gamma-glutamyl phosphate reductase (426 aa).

This sequence belongs to the gamma-glutamyl phosphate reductase family.

The protein localises to the cytoplasm. It catalyses the reaction L-glutamate 5-semialdehyde + phosphate + NADP(+) = L-glutamyl 5-phosphate + NADPH + H(+). It participates in amino-acid biosynthesis; L-proline biosynthesis; L-glutamate 5-semialdehyde from L-glutamate: step 2/2. Its function is as follows. Catalyzes the NADPH-dependent reduction of L-glutamate 5-phosphate into L-glutamate 5-semialdehyde and phosphate. The product spontaneously undergoes cyclization to form 1-pyrroline-5-carboxylate. The chain is Gamma-glutamyl phosphate reductase from Cupriavidus pinatubonensis (strain JMP 134 / LMG 1197) (Cupriavidus necator (strain JMP 134)).